The following is a 31-amino-acid chain: Potassium channel toxin alpha-KTx 5.5 (31 aa).

Disulfide bonds link C3–C21, C8–C26, and C12–C28. The [R/K]XCQ motif stretch occupies residues R6 to E9. H31 carries the histidine amide modification.

As to expression, expressed by the venom gland.

Its subcellular location is the secreted. Its function is as follows. Blocks small conductance calcium-activated potassium channels. In Hottentotta tamulus (Eastern Indian scorpion), this protein is Potassium channel toxin alpha-KTx 5.5.